Here is a 703-residue protein sequence, read N- to C-terminus: Elongation factor G 1 (703 aa).

Residues 8–290 (ERYRNIGISA…AVIDFLPSPV (283 aa)) enclose the tr-type G domain. Residues 17–24 (AHIDAGKT), 88–92 (DTPGH), and 142–145 (NKMD) each bind GTP.

This sequence belongs to the TRAFAC class translation factor GTPase superfamily. Classic translation factor GTPase family. EF-G/EF-2 subfamily.

The protein localises to the cytoplasm. Its function is as follows. Catalyzes the GTP-dependent ribosomal translocation step during translation elongation. During this step, the ribosome changes from the pre-translocational (PRE) to the post-translocational (POST) state as the newly formed A-site-bound peptidyl-tRNA and P-site-bound deacylated tRNA move to the P and E sites, respectively. Catalyzes the coordinated movement of the two tRNA molecules, the mRNA and conformational changes in the ribosome. In Ralstonia nicotianae (strain ATCC BAA-1114 / GMI1000) (Ralstonia solanacearum), this protein is Elongation factor G 1.